The following is a 153-amino-acid chain: Nucleoside diphosphate kinase (153 aa).

Lys9, Phe57, Arg85, Thr91, Arg102, and Asn112 together coordinate ATP. Catalysis depends on His115, which acts as the Pros-phosphohistidine intermediate.

Belongs to the NDK family. In terms of assembly, homotetramer. It depends on Mg(2+) as a cofactor.

Its subcellular location is the cytoplasm. The catalysed reaction is a 2'-deoxyribonucleoside 5'-diphosphate + ATP = a 2'-deoxyribonucleoside 5'-triphosphate + ADP. It carries out the reaction a ribonucleoside 5'-diphosphate + ATP = a ribonucleoside 5'-triphosphate + ADP. Major role in the synthesis of nucleoside triphosphates other than ATP. The ATP gamma phosphate is transferred to the NDP beta phosphate via a ping-pong mechanism, using a phosphorylated active-site intermediate. The protein is Nucleoside diphosphate kinase of Parabacteroides distasonis (strain ATCC 8503 / DSM 20701 / CIP 104284 / JCM 5825 / NCTC 11152).